Reading from the N-terminus, the 391-residue chain is Probable sugar efflux transporter (391 aa).

Transmembrane regions (helical) follow at residues 16–36 (VFVF…PIAL), 51–71 (VGLM…PLML), 82–102 (LLFL…AWDF), 103–123 (WVLL…WSIT), 138–158 (QALG…LPLG), 170–190 (TFGM…RLLP), 210–230 (PLLV…FTTY), 247–267 (VATL…FLFG), 277–297 (FIAC…SFKH), 300–320 (WVIF…GISL), 338–358 (IFSG…SIVI), and 361–381 (LGLG…LFWF).

It belongs to the major facilitator superfamily. SotB (TC 2.A.1.2) family.

It is found in the cell inner membrane. Functionally, involved in the efflux of sugars. The physiological role may be the reduction of the intracellular concentration of toxic sugars or sugar metabolites. In Helicobacter acinonychis (strain Sheeba), this protein is Probable sugar efflux transporter.